The sequence spans 318 residues: Non-homologous end joining protein Ku (318 aa).

A Ku domain is found at 10 to 193 (AFGLVNVPVK…EVQIKPAELK (184 aa)). The tract at residues 259–318 (SVKARKGGKSDSKDDSDSESDSKESKSDSKPAKKAPAKKAAAKKSTAKKAPAKKAAAKKS) is disordered. Over residues 266–289 (GKSDSKDDSDSESDSKESKSDSKP) the composition is skewed to basic and acidic residues. The segment covering 290–318 (AKKAPAKKAAAKKSTAKKAPAKKAAAKKS) has biased composition (basic residues).

The protein belongs to the prokaryotic Ku family. In terms of assembly, homodimer. Interacts with Sir2 and probably also with LigD; may form a trimeric complex during NHEJ.

In terms of biological role, with LigD forms a non-homologous end joining (NHEJ) repair enzyme which repairs blunt-end and 5'-overhang double strand breaks (DSB) with about 50% fidelity, and DSB with non-complementary 3' ends. Plays a partial role in NHEJ on 3'-overhang repair of complementary ends. NHEJ repairs DSB with blunt ends and 5' overhangs with a high level of nucleotide insertion/deletion, without a need for microhomology. This protein but not LigD also suppresses homologous recombination. Overexpression dramatically increases the efficiency of NHEJ with no effect on repair fidelity. This chain is Non-homologous end joining protein Ku, found in Mycolicibacterium smegmatis (strain ATCC 700084 / mc(2)155) (Mycobacterium smegmatis).